The chain runs to 225 residues: uncharacterized protein (225 aa).

The chain crosses the membrane as a helical span at residues 181-203 (INIFVVFMFIIYLLFYIISSTVF).

Its subcellular location is the cell membrane. This is an uncharacterized protein from Bacillus anthracis.